Here is a 304-residue protein sequence, read N- to C-terminus: Probable solute-binding protein AdeT1 (304 aa).

Belongs to the bacterial solute-binding protein 7 family.

Functionally, mediates antimicrobial resistance via active efflux. Contributes to resistance to antibiotics such as chloramphenicol, erythromycin and novobiocin. May be part of a tripartite ATP-independent periplasmic (TRAP) transport system. The sequence is that of Probable solute-binding protein AdeT1 from Acinetobacter baumannii.